The primary structure comprises 339 residues: Ketol-acid reductoisomerase (NADP(+)) (339 aa).

The region spanning 1-182 is the KARI N-terminal Rossmann domain; it reads MRVYYDRDAD…GGGRAGIIET (182 aa). NADP(+) contacts are provided by residues 24–27, Arg48, Ser51, Thr53, and 83–86; these read YGSQ and DELQ. Residue His108 is part of the active site. Gly134 provides a ligand contact to NADP(+). Positions 183 to 328 constitute a KARI C-terminal knotted domain; the sequence is TFREECETDL…AKLRAMMPWI (146 aa). Mg(2+) is bound by residues Asp191, Glu195, Glu227, and Glu231. Ser252 provides a ligand contact to substrate.

It belongs to the ketol-acid reductoisomerase family. It depends on Mg(2+) as a cofactor.

The catalysed reaction is (2R)-2,3-dihydroxy-3-methylbutanoate + NADP(+) = (2S)-2-acetolactate + NADPH + H(+). It catalyses the reaction (2R,3R)-2,3-dihydroxy-3-methylpentanoate + NADP(+) = (S)-2-ethyl-2-hydroxy-3-oxobutanoate + NADPH + H(+). It participates in amino-acid biosynthesis; L-isoleucine biosynthesis; L-isoleucine from 2-oxobutanoate: step 2/4. The protein operates within amino-acid biosynthesis; L-valine biosynthesis; L-valine from pyruvate: step 2/4. Functionally, involved in the biosynthesis of branched-chain amino acids (BCAA). Catalyzes an alkyl-migration followed by a ketol-acid reduction of (S)-2-acetolactate (S2AL) to yield (R)-2,3-dihydroxy-isovalerate. In the isomerase reaction, S2AL is rearranged via a Mg-dependent methyl migration to produce 3-hydroxy-3-methyl-2-ketobutyrate (HMKB). In the reductase reaction, this 2-ketoacid undergoes a metal-dependent reduction by NADPH to yield (R)-2,3-dihydroxy-isovalerate. This is Ketol-acid reductoisomerase (NADP(+)) from Methylocella silvestris (strain DSM 15510 / CIP 108128 / LMG 27833 / NCIMB 13906 / BL2).